A 342-amino-acid chain; its full sequence is Porphobilinogen deaminase (342 aa).

Cysteine 249 carries the S-(dipyrrolylmethanemethyl)cysteine modification. Residues 323–342 (AAAKQGAAEDGAADSAATGE) form a disordered region.

This sequence belongs to the HMBS family. Monomer. The cofactor is dipyrromethane.

It carries out the reaction 4 porphobilinogen + H2O = hydroxymethylbilane + 4 NH4(+). It functions in the pathway porphyrin-containing compound metabolism; protoporphyrin-IX biosynthesis; coproporphyrinogen-III from 5-aminolevulinate: step 2/4. Tetrapolymerization of the monopyrrole PBG into the hydroxymethylbilane pre-uroporphyrinogen in several discrete steps. The chain is Porphobilinogen deaminase from Paraburkholderia phytofirmans (strain DSM 17436 / LMG 22146 / PsJN) (Burkholderia phytofirmans).